The following is a 1462-amino-acid chain: Serine/threonine-protein kinase HSL1 (1462 aa).

2 disordered regions span residues 1-26 and 41-69; these read MSTVVNRRSSHQFDSPSNHLDHSSSM and RLSQISTNTNNSNKKRKTQNKIGPWKLGR. The 266-residue stretch at 65-330 folds into the Protein kinase domain; sequence WKLGRTLGRG…IDAILTHPLL (266 aa). ATP contacts are provided by residues 71 to 79 and K94; that span reads LGRGSTGRV. Catalysis depends on D201, which acts as the Proton acceptor. 6 disordered regions span residues 412–450, 471–540, 598–637, 992–1031, 1095–1230, and 1269–1321; these read SNSFNSSNDVDSARSLPRSTSYVKTTVTDHATGEKHTTV, SAKG…TSVN, ENSKPVSKTPVSQLPPPPPPPIETPTSRTNSVKRGKTWSL, EDEEFEDEKPFISVPSSEDDEGNTHKNKRGGLRDSGNYDF, KETL…QQTK, and NRAA…LQKE. Polar residues-rich tracts occupy residues 428-440 and 471-487; these read PRSTSYVKTTVTD and SAKGNVLSNITNRPNTP. The span at 510–526 shows a compositional bias: low complexity; sequence ASRSRNASSRSLKSNSS. The segment covering 527–540 has biased composition (polar residues); that stretch reads TGRNGNNASVTSVN. The segment covering 610–620 has biased composition (pro residues); the sequence is QLPPPPPPPIE. A coiled-coil region spans residues 636-715; that stretch reads SLARRERELA…KLQKHQSAHD (80 aa). Positions 1095–1130 are enriched in basic and acidic residues; sequence KETLLKNHSSDEATIEVKEDNNEHDFNDKIKQHYDD. A compositionally biased stretch (acidic residues) spans 1131–1153; that stretch reads NGDSEEDDEDEDEEEEDDDDDDD. 3 stretches are compositionally biased toward polar residues: residues 1165 to 1176, 1197 to 1218, and 1292 to 1302; these read HNYSLAEITSES, STGIFSTTQFPRSPYVVNNNGD, and NISQPLSSPTK.

This sequence belongs to the protein kinase superfamily. CAMK Ser/Thr protein kinase family. NIM1 subfamily. In terms of processing, phosphorylated throughout the cell cycle, except for the G1 phase.

The protein localises to the bud neck. It carries out the reaction L-seryl-[protein] + ATP = O-phospho-L-seryl-[protein] + ADP + H(+). It catalyses the reaction L-threonyl-[protein] + ATP = O-phospho-L-threonyl-[protein] + ADP + H(+). Functionally, protein kinase involved in determination of morphology during the cell cycle of both yeast-form and hyphal cells via regulation of SWE1 and CDC28. Regulates pseudohypha formation, but is not required for septin ring organization or septum formation. Plays an essential role in virulence in a mouse model. The chain is Serine/threonine-protein kinase HSL1 (HSL1) from Candida albicans (strain SC5314 / ATCC MYA-2876) (Yeast).